Consider the following 396-residue polypeptide: Putative F-box/kelch-repeat protein At3g17540 (396 aa).

An F-box domain is found at T4 to N50. Kelch repeat units lie at residues L163 to L209, V253 to V299, and R338 to G386.

This is Putative F-box/kelch-repeat protein At3g17540 from Arabidopsis thaliana (Mouse-ear cress).